The chain runs to 99 residues: Integration host factor subunit alpha (99 aa).

Residues 49-71 (FGNFDLRDKNQRPGRNPKTGEDI) form a disordered region.

This sequence belongs to the bacterial histone-like protein family. Heterodimer of an alpha and a beta chain.

Functionally, this protein is one of the two subunits of integration host factor, a specific DNA-binding protein that functions in genetic recombination as well as in transcriptional and translational control. The protein is Integration host factor subunit alpha of Shewanella frigidimarina (strain NCIMB 400).